The chain runs to 122 residues: Large ribosomal subunit protein uL14 (122 aa).

This sequence belongs to the universal ribosomal protein uL14 family. In terms of assembly, part of the 50S ribosomal subunit. Forms a cluster with proteins L3 and L19. In the 70S ribosome, L14 and L19 interact and together make contacts with the 16S rRNA in bridges B5 and B8.

In terms of biological role, binds to 23S rRNA. Forms part of two intersubunit bridges in the 70S ribosome. This is Large ribosomal subunit protein uL14 from Symbiobacterium thermophilum (strain DSM 24528 / JCM 14929 / IAM 14863 / T).